The following is a 261-amino-acid chain: Small ribosomal subunit protein uS2 (261 aa).

It belongs to the universal ribosomal protein uS2 family.

This Streptococcus mutans serotype c (strain ATCC 700610 / UA159) protein is Small ribosomal subunit protein uS2.